A 1348-amino-acid polypeptide reads, in one-letter code: Kinesin-like protein KIF7 (1348 aa).

Residues 15–349 (PVRVALRVRP…LNYASRAQNI (335 aa)) form the Kinesin motor domain. 94–101 (GQTGSGKT) provides a ligand contact to ATP. An interaction with DLG5 region spans residues 358-479 (HPEAERVPEE…EDQAAQGTSG (122 aa)). The segment at 358-1211 (HPEAERVPEE…LGRHMWINQE (854 aa)) is interaction with SMO. 2 disordered regions span residues 451–486 (RSTL…DEGT) and 607–674 (AQAD…VCPE). The stretch at 480–542 (RKGDEGTQQL…ELRLRLELAQ (63 aa)) forms a coiled coil. The span at 620–636 (SEEEGEEEEEEEEEEEE) shows a compositional bias: acidic residues. 2 coiled-coil regions span residues 698–1057 (APAA…IEAL) and 1109–1211 (FDKV…INQE). At Ser903 the chain carries Phosphoserine. Disordered stretches follow at residues 1288-1314 (LCSE…VLPM) and 1328-1348 (KPRW…KNPL).

This sequence belongs to the TRAFAC class myosin-kinesin ATPase superfamily. Kinesin family. As to quaternary structure, can form homodimers and interacts with microtubules. Interacts with GLI1 and SMO. Interacts with GLI2, GLI3 and SUFU. Interacts with NPHP1. Interacts with SMO and DLG5 (via PDZ4 or guanylate kinase-like domain). Polyubiquitinated by UBR3. Expressed in heart, lung, liver, kidney, testis, spleen and cerebellum.

It localises to the cell projection. The protein localises to the cilium. The protein resides in the cytoplasm. It is found in the cytoskeleton. Its subcellular location is the cilium basal body. Essential for hedgehog signaling regulation: acts both as a negative and a positive regulator of sonic hedgehog (Shh) and Indian hedgehog (Ihh) pathways, acting downstream of SMO, through both SUFU-dependent and -independent mechanisms. Involved in the regulation of microtubular dynamics. Required for proper organization of the ciliary tip and control of ciliary localization of SUFU-GLI2 complexes. Required for localization of GLI3 to cilia in response to Shh. Negatively regulates Shh signaling by preventing inappropriate activation of the transcriptional activator GLI2 in the absence of ligand. Positively regulates Shh signaling by preventing the processing of the transcription factor GLI3 into its repressor form. In keratinocytes, promotes the dissociation of SUFU-GLI2 complexes, GLI2 nuclear translocation and Shh signaling activation. Involved in the regulation of epidermal differentiation and chondrocyte development. In Mus musculus (Mouse), this protein is Kinesin-like protein KIF7 (Kif7).